Reading from the N-terminus, the 444-residue chain is DNA primase DnaG (444 aa).

The Toprim domain occupies 186–260 (DSIIVVEGRN…EVDFVARAPP (75 aa)). Residues E192, D234, and D236 each contribute to the Mg(2+) site.

It belongs to the archaeal DnaG primase family. In terms of assembly, forms a ternary complex with MCM helicase and DNA. Component of the archaeal exosome complex. Mg(2+) serves as cofactor.

It carries out the reaction ssDNA + n NTP = ssDNA/pppN(pN)n-1 hybrid + (n-1) diphosphate.. RNA polymerase that catalyzes the synthesis of short RNA molecules used as primers for DNA polymerase during DNA replication. Also part of the exosome, which is a complex involved in RNA degradation. Acts as a poly(A)-binding protein that enhances the interaction between heteromeric, adenine-rich transcripts and the exosome. The sequence is that of DNA primase DnaG from Thermoplasma volcanium (strain ATCC 51530 / DSM 4299 / JCM 9571 / NBRC 15438 / GSS1).